A 445-amino-acid polypeptide reads, in one-letter code: Exodeoxyribonuclease 7 large subunit (445 aa).

Belongs to the XseA family. Heterooligomer composed of large and small subunits.

It is found in the cytoplasm. The catalysed reaction is Exonucleolytic cleavage in either 5'- to 3'- or 3'- to 5'-direction to yield nucleoside 5'-phosphates.. In terms of biological role, bidirectionally degrades single-stranded DNA into large acid-insoluble oligonucleotides, which are then degraded further into small acid-soluble oligonucleotides. The protein is Exodeoxyribonuclease 7 large subunit of Staphylococcus epidermidis (strain ATCC 35984 / DSM 28319 / BCRC 17069 / CCUG 31568 / BM 3577 / RP62A).